The following is a 656-amino-acid chain: Fidgetin-like protein 1 (656 aa).

A compositionally biased stretch (polar residues) spans 293–302 (KYSNQPQRNP). The disordered stretch occupies residues 293–354 (KYSNQPQRNP…QGNSEMNAPS (62 aa)). Over residues 331-340 (RQEDVQDSNR) the composition is skewed to basic and acidic residues. ATP is bound by residues Ala386 and 426 to 431 (GTGKTL).

It belongs to the AAA ATPase family. Hexamer. The cofactor is Mg(2+).

Its subcellular location is the nucleus. The protein resides in the cytoplasm. The protein localises to the perinuclear region. It catalyses the reaction ATP + H2O = ADP + phosphate + H(+). Its function is as follows. May be involved in DNA double-strand break (DBS) repair via homologous recombination (HR). May regulate osteoblast proliferation and differentiation. The protein is Fidgetin-like protein 1 (fignl1) of Xenopus tropicalis (Western clawed frog).